Consider the following 419-residue polypeptide: ATP-dependent RNA helicase RhlB (419 aa).

The Q motif motif lies at 9 to 37 (QRFSDLALHRSVQQAIKEKGFEFCTPIQA). Residues 40–217 (LPITLKGQDI…FEHMNDPQYV (178 aa)) enclose the Helicase ATP-binding domain. Position 53 to 60 (53 to 60 (AQTGTGKT)) interacts with ATP. Residues 163–166 (DEAD) carry the DEAD box motif. A Helicase C-terminal domain is found at 241-388 (KMALLMTLLE…VSQYDAKALI (148 aa)).

It belongs to the DEAD box helicase family. RhlB subfamily. In terms of assembly, component of the RNA degradosome, which is a multiprotein complex involved in RNA processing and mRNA degradation.

Its subcellular location is the cytoplasm. The enzyme catalyses ATP + H2O = ADP + phosphate + H(+). DEAD-box RNA helicase involved in RNA degradation. Has RNA-dependent ATPase activity and unwinds double-stranded RNA. In Histophilus somni (strain 129Pt) (Haemophilus somnus), this protein is ATP-dependent RNA helicase RhlB.